The following is a 240-amino-acid chain: MALQPVTRRSVPEEVFEQIATDVLTGEMPPGEALPSERRLAELLGVSRPAVREALKRLSAAGLVEVRQGDVTTVRDFRRHAGLDLLPRLLFRNGELDISVVRSILEARLRNFPKVAELAAERNEPELAELLQDSLRALDTEEDPIVWQRHTLDFWDHVVDSAGSIVDRLMYNAFRAAYEPTLAALTTTMTAAAKRPSDYRKLADAICSGDPTGAKKAAQDLLELANTSLMAVLVSQASRQ.

Residues 9–77 (RSVPEEVFEQ…QGDVTTVRDF (69 aa)) enclose the HTH gntR-type domain. The segment at residues 37-56 (ERRLAELLGVSRPAVREALK) is a DNA-binding region (H-T-H motif).

Functionally, negatively regulates the expression of its operon as well as expression of end (endonuclease 4). This is HTH-type transcriptional regulator Mce2R (mce2R) from Mycobacterium tuberculosis (strain CDC 1551 / Oshkosh).